Consider the following 644-residue polypeptide: Exoribonuclease 2 (644 aa).

In terms of domain architecture, RNB spans 189–516 (RQDLTALNFV…NHRLLKAVIK (328 aa)). The 83-residue stretch at 561–643 (NTRFAAEIID…ETRSIIARPA (83 aa)) folds into the S1 motif domain.

The protein belongs to the RNR ribonuclease family. RNase II subfamily.

Its subcellular location is the cytoplasm. It catalyses the reaction Exonucleolytic cleavage in the 3'- to 5'-direction to yield nucleoside 5'-phosphates.. Functionally, involved in mRNA degradation. Hydrolyzes single-stranded polyribonucleotides processively in the 3' to 5' direction. In Salmonella dublin (strain CT_02021853), this protein is Exoribonuclease 2.